A 336-amino-acid polypeptide reads, in one-letter code: Ketol-acid reductoisomerase (NADP(+)) (336 aa).

Residues 1-181 (MNVYYDKDCN…GGGRTGIIET (181 aa)) enclose the KARI N-terminal Rossmann domain. Residues 24–27 (YGSQ), R47, S50, S52, and 82–85 (DEFQ) contribute to the NADP(+) site. Residue H107 is part of the active site. Residue G133 participates in NADP(+) binding. Residues 182-327 (TFQDETETDL…GKLRSMMPWI (146 aa)) enclose the KARI C-terminal knotted domain. D190, E194, E226, and E230 together coordinate Mg(2+). A substrate-binding site is contributed by S251.

This sequence belongs to the ketol-acid reductoisomerase family. The cofactor is Mg(2+).

It carries out the reaction (2R)-2,3-dihydroxy-3-methylbutanoate + NADP(+) = (2S)-2-acetolactate + NADPH + H(+). The enzyme catalyses (2R,3R)-2,3-dihydroxy-3-methylpentanoate + NADP(+) = (S)-2-ethyl-2-hydroxy-3-oxobutanoate + NADPH + H(+). It functions in the pathway amino-acid biosynthesis; L-isoleucine biosynthesis; L-isoleucine from 2-oxobutanoate: step 2/4. It participates in amino-acid biosynthesis; L-valine biosynthesis; L-valine from pyruvate: step 2/4. Its function is as follows. Involved in the biosynthesis of branched-chain amino acids (BCAA). Catalyzes an alkyl-migration followed by a ketol-acid reduction of (S)-2-acetolactate (S2AL) to yield (R)-2,3-dihydroxy-isovalerate. In the isomerase reaction, S2AL is rearranged via a Mg-dependent methyl migration to produce 3-hydroxy-3-methyl-2-ketobutyrate (HMKB). In the reductase reaction, this 2-ketoacid undergoes a metal-dependent reduction by NADPH to yield (R)-2,3-dihydroxy-isovalerate. The protein is Ketol-acid reductoisomerase (NADP(+)) of Geotalea daltonii (strain DSM 22248 / JCM 15807 / FRC-32) (Geobacter daltonii).